We begin with the raw amino-acid sequence, 166 residues long: 3-isopropylmalate dehydratase small subunit (166 aa).

The protein belongs to the LeuD family. LeuD type 2 subfamily. In terms of assembly, heterodimer of LeuC and LeuD.

The enzyme catalyses (2R,3S)-3-isopropylmalate = (2S)-2-isopropylmalate. It participates in amino-acid biosynthesis; L-leucine biosynthesis; L-leucine from 3-methyl-2-oxobutanoate: step 2/4. Functionally, catalyzes the isomerization between 2-isopropylmalate and 3-isopropylmalate, via the formation of 2-isopropylmaleate. In Caldicellulosiruptor bescii (strain ATCC BAA-1888 / DSM 6725 / KCTC 15123 / Z-1320) (Anaerocellum thermophilum), this protein is 3-isopropylmalate dehydratase small subunit.